Consider the following 594-residue polypeptide: MDFQSKKLINDPNDVVTEFIEGLIENYPGLQYLDGFPEVKVVLRADVSGAKYDKVAIISGGGSGHEPAHAGFVGEGMLTAAICGDVFASPNVDSILAGIRAVTGPMGCLLIVKNYTGDRLNFGLAAEQAKSEGYKVEMVIVGDDCALPPPRGIAGRRGLAGTLLVHKVAGAAAACGLPLADVAAEAKRASEMVGTMGVALSVCTSPGQVTSDRLGPGKMELGLGIHGEPGAAVADLQPVDVVVSHVLKEILSPETNYVPITRGSRVVLLINGLGATPLMELMIIAGKAVPELQLEHGLAVDRVYTGSFMTSLDMAGFSISVMKADQAILDRLDAPTKAPNWPVGAEGNRPPAKIPVPLPPSHSIKIEKTLSRPEKLSPQGHILETAIEAAATEVVNLRDNLNEWDNKVGDGDCGSTMFRGAVAILEDMKKYYPLNDPAETVNEIGASIGRVMGGTSGILYSIFCKAAYAKLKENAESVVTAIHWADALEAAIAAVSKYGGASAGYRTLLDALIPALSALKERLNAGDDPADAFIISAEAASAGAESTKHMQAQAGRSTYVPGDILASVPDPGAMAAAAWYRAAALAVKEKYNTA.

One can recognise a DhaK domain in the interval aspartate 11 to tryptophan 341. Substrate contacts are provided by residues glycine 62 to histidine 65, lysine 113, and aspartate 118. The active-site Tele-hemiaminal-histidine intermediate is the histidine 226. Positions proline 339–leucine 358 are disordered. A DhaL domain is found at histidine 381–leucine 585. Residues aspartate 410–cysteine 413, threonine 455–serine 456, glycine 499, threonine 507–leucine 508, and aspartate 570–glycine 572 each bind ATP.

This sequence belongs to the dihydroxyacetone kinase (DAK) family.

The chain is Putative 3,4-dihydroxy-2-butanone kinase (DHBK) from Solanum lycopersicum (Tomato).